The following is a 209-amino-acid chain: Large ribosomal subunit protein uL3 (209 aa).

Gln150 is subject to N5-methylglutamine.

Belongs to the universal ribosomal protein uL3 family. In terms of assembly, part of the 50S ribosomal subunit. Forms a cluster with proteins L14 and L19. Methylated by PrmB.

Functionally, one of the primary rRNA binding proteins, it binds directly near the 3'-end of the 23S rRNA, where it nucleates assembly of the 50S subunit. This Buchnera aphidicola subsp. Acyrthosiphon pisum (strain 5A) protein is Large ribosomal subunit protein uL3.